Here is a 385-residue protein sequence, read N- to C-terminus: Prostacyclin receptor (385 aa).

At 1–16 (MADSCRNLTYVRDSVG) the chain is on the extracellular side. 2 disulfide bridges follow: Cys-5/Cys-165 and Cys-92/Cys-170. Residue Asn-7 is glycosylated (N-linked (GlcNAc...) asparagine). A helical transmembrane segment spans residues 17–38 (PATSTLMFVAGVVGNGLALGIL). Residues 39-51 (GARRHSRPSAFAV) lie on the Cytoplasmic side of the membrane. Residues 52–76 (LVTGLGVTDLLGTCFLSPAVFAAYA) form a helical membrane-spanning segment. The Extracellular portion of the chain corresponds to 77–94 (RNSSLLGLARGRPALCDA). The chain crosses the membrane as a helical span at residues 95 to 115 (FAFAMTFFGLASTLILFAMAV). Over 116-134 (ERCLALSHPYLYAQLDGPR) the chain is Cytoplasmic. A helical membrane pass occupies residues 135–158 (RARLALPAIYAFCTIFCSLPFLGL). Topologically, residues 159 to 181 (GQHQQYCPGSWCFIRMRSAEPGG) are extracellular. The helical transmembrane segment at 182–208 (CAFLLAYASLVALLVAAIVLCNGSVTL) threads the bilayer. Residues 209–234 (SLCRMYRQQRRHQARCPRPRAGEDEV) lie on the Cytoplasmic side of the membrane. A helical membrane pass occupies residues 235–259 (DHLILLALMTGIMAVCSLPLTPQIR). Topologically, residues 260 to 273 (GFTQAIAPDSSEMG) are extracellular. A helical transmembrane segment spans residues 274–294 (DLLAFRFNAFNPILDPWVFIL). Over 295–385 (FRKSVFQRLK…AGSEAACSLC (91 aa)) the chain is Cytoplasmic. Residues 315 to 344 (AQGDSRTSLSQSASGRKDSSAPPALEGKKG) form a disordered region. Residues 318 to 328 (DSRTSLSQSAS) are compositionally biased toward polar residues. At Cys-382 the chain carries Cysteine methyl ester. Cys-382 is lipidated: S-farnesyl cysteine. A propeptide spans 383 to 385 (SLC) (removed in mature form).

It belongs to the G-protein coupled receptor 1 family. In terms of assembly, interacts (non-isoprenylated C-terminus) with PDZK1. Isoprenylation does not influence ligand binding but is required for efficient coupling to the effectors adenylyl cyclase and phospholipase C.

It localises to the cell membrane. In terms of biological role, receptor for prostacyclin (prostaglandin I2 or PGI2). The activity of this receptor is mediated by G(s) proteins which activate adenylate cyclase. This chain is Prostacyclin receptor (PTGIR), found in Bos taurus (Bovine).